A 771-amino-acid chain; its full sequence is Kojibiose phosphorylase (771 aa).

Residue 358–359 (WD) participates in substrate binding. E498 functions as the Proton donor in the catalytic mechanism. Position 611–612 (611–612 (KQ)) interacts with substrate.

This sequence belongs to the glycosyl hydrolase 65 family.

The enzyme catalyses kojibiose + phosphate = beta-D-glucose 1-phosphate + D-glucose. In terms of biological role, catalyzes the reversible phosphorolysis of kojibiose into beta-D-glucose 1-phosphate (Glc1P) and D-glucose. This chain is Kojibiose phosphorylase (kojP), found in Caldanaerobacter subterraneus subsp. tengcongensis (strain DSM 15242 / JCM 11007 / NBRC 100824 / MB4) (Thermoanaerobacter tengcongensis).